A 193-amino-acid chain; its full sequence is Peptidyl-tRNA hydrolase (193 aa).

Position 15 (tyrosine 15) interacts with tRNA. Histidine 20 acts as the Proton acceptor in catalysis. Residues phenylalanine 65, asparagine 67, and asparagine 113 each contribute to the tRNA site.

This sequence belongs to the PTH family. As to quaternary structure, monomer.

The protein localises to the cytoplasm. It carries out the reaction an N-acyl-L-alpha-aminoacyl-tRNA + H2O = an N-acyl-L-amino acid + a tRNA + H(+). Functionally, hydrolyzes ribosome-free peptidyl-tRNAs (with 1 or more amino acids incorporated), which drop off the ribosome during protein synthesis, or as a result of ribosome stalling. In terms of biological role, catalyzes the release of premature peptidyl moieties from peptidyl-tRNA molecules trapped in stalled 50S ribosomal subunits, and thus maintains levels of free tRNAs and 50S ribosomes. This is Peptidyl-tRNA hydrolase from Ehrlichia ruminantium (strain Welgevonden).